Reading from the N-terminus, the 156-residue chain is Small ribosomal subunit protein uS7 (156 aa).

Belongs to the universal ribosomal protein uS7 family. In terms of assembly, part of the 30S ribosomal subunit. Contacts proteins S9 and S11.

Functionally, one of the primary rRNA binding proteins, it binds directly to 16S rRNA where it nucleates assembly of the head domain of the 30S subunit. Is located at the subunit interface close to the decoding center, probably blocks exit of the E-site tRNA. This is Small ribosomal subunit protein uS7 from Acetivibrio thermocellus (strain ATCC 27405 / DSM 1237 / JCM 9322 / NBRC 103400 / NCIMB 10682 / NRRL B-4536 / VPI 7372) (Clostridium thermocellum).